The primary structure comprises 300 residues: F-box protein SKIP1 (300 aa).

Residues Leu-11 to Phe-52 form the F-box; degenerate domain.

As to quaternary structure, part of a SCF (ASK-cullin-F-box) protein ligase complex. Interacts with SKP1A/ASK1 and SKP1B/ASK2.

It localises to the nucleus. Its pathway is protein modification; protein ubiquitination. Functionally, component of SCF(ASK-cullin-F-box) E3 ubiquitin ligase complexes, which may mediate the ubiquitination and subsequent proteasomal degradation of target proteins. This Arabidopsis thaliana (Mouse-ear cress) protein is F-box protein SKIP1 (SKIP1).